We begin with the raw amino-acid sequence, 233 residues long: Lipoprotein-releasing system ATP-binding protein LolD (233 aa).

The ABC transporter domain occupies 6–233; that stretch reads LQCDNLCKRY…TAELSLMGAE (228 aa). ATP is bound at residue 42–49; the sequence is GSSGSGKS.

This sequence belongs to the ABC transporter superfamily. Lipoprotein translocase (TC 3.A.1.125) family. As to quaternary structure, the complex is composed of two ATP-binding proteins (LolD) and two transmembrane proteins (LolC and LolE).

The protein resides in the cell inner membrane. Functionally, part of the ABC transporter complex LolCDE involved in the translocation of mature outer membrane-directed lipoproteins, from the inner membrane to the periplasmic chaperone, LolA. Responsible for the formation of the LolA-lipoprotein complex in an ATP-dependent manner. This Shigella dysenteriae serotype 1 (strain Sd197) protein is Lipoprotein-releasing system ATP-binding protein LolD.